A 95-amino-acid chain; its full sequence is MTKSELIEKLATRQSQLSAKEVESAIKEMLEQMATTLEGGDRIEIRGFGSFSLHYRAPRTGRNPKTGTSVELEGKYVPHFKPGKELRERVDAINS.

This sequence belongs to the bacterial histone-like protein family. Heterodimer of an alpha and a beta chain.

This protein is one of the two subunits of integration host factor, a specific DNA-binding protein that functions in genetic recombination as well as in transcriptional and translational control. The polypeptide is Integration host factor subunit beta (Shewanella loihica (strain ATCC BAA-1088 / PV-4)).